The primary structure comprises 97 residues: Large ribosomal subunit protein eL21 (97 aa).

It belongs to the eukaryotic ribosomal protein eL21 family.

This Methanococcus vannielii (strain ATCC 35089 / DSM 1224 / JCM 13029 / OCM 148 / SB) protein is Large ribosomal subunit protein eL21.